A 570-amino-acid chain; its full sequence is Alpha-glucosidase (570 aa).

Asp-206 functions as the Nucleophile in the catalytic mechanism. Glu-263 (proton donor) is an active-site residue.

Belongs to the glycosyl hydrolase 13 family.

It carries out the reaction Hydrolysis of terminal, non-reducing (1-&gt;4)-linked alpha-D-glucose residues with release of alpha-D-glucose.. This Candida albicans (Yeast) protein is Alpha-glucosidase (MAL2).